The chain runs to 715 residues: Formate dehydrogenase H (715 aa).

In terms of domain architecture, 4Fe-4S Mo/W bis-MGD-type spans 1 to 56 (MKKVVTVCPYCASGCKINLVVDNGKIVRAEAAQGKTNQGTLCLKGYYGWDFINDTQ). [4Fe-4S] cluster contacts are provided by Cys-8, Cys-11, Cys-15, and Cys-42. The active-site Electron donor/acceptor is Lys-44. Arg-110, Sec-140, Asn-176, Asp-179, Ser-180, Cys-201, Asp-202, Arg-204, Gly-221, Asn-223, Met-297, Gln-335, Asp-404, Thr-408, Gln-428, Asp-429, Ser-445, Asp-478, Arg-581, Glu-582, His-585, Ser-587, Tyr-678, and Lys-679 together coordinate Mo-bis(molybdopterin guanine dinucleotide). Sec-140 functions as the Proton donor/acceptor in the catalytic mechanism. Position 140 (Sec-140) is a non-standard amino acid, selenocysteine.

It belongs to the prokaryotic molybdopterin-containing oxidoreductase family. In terms of assembly, consists of two separable enzymatic activities: a formate dehydrogenase component (FDH-H) and hydrogenase-3. [4Fe-4S] cluster is required as a cofactor. The cofactor is Mo-bis(molybdopterin guanine dinucleotide).

It catalyses the reaction formate + A + H(+) = AH2 + CO2. With respect to regulation, inhibited by aerobic conditions. Decomposes formic acid to hydrogen and carbon dioxide under anaerobic conditions in the absence of exogenous electron acceptors. The polypeptide is Formate dehydrogenase H (fdhF) (Escherichia coli (strain K12)).